The primary structure comprises 620 residues: Rpb7-binding protein seb1 (620 aa).

The region spanning 1–151 (MSGIAEFDGI…SLRSKLKDAM (151 aa)) is the CID domain. Disordered stretches follow at residues 151–191 (MAST…RPVE) and 327–398 (SVPL…TIPP). Position 343 is a phosphoserine (Ser-343). The segment covering 361–374 (PSPSHLSIPSTLPP) has biased composition (low complexity). Residues 406–478 (RTLFLGGITR…TTIRTKWGVG (73 aa)) enclose the RRM domain. Residues 558 to 620 (RGRKPYRGGP…YVSQPPWQPQ (63 aa)) are disordered. A compositionally biased stretch (basic and acidic residues) spans 570–580 (HHGERHFDSGN).

Interacts with rpb7.

Its subcellular location is the nucleus. Functionally, involved in the processing of pol II transcripts. The chain is Rpb7-binding protein seb1 (seb1) from Schizosaccharomyces pombe (strain 972 / ATCC 24843) (Fission yeast).